The following is a 185-amino-acid chain: CASP-like protein 5A1 (185 aa).

Residues 1–48 (MNVSHPAVHPVGVPPALGGQAVPPRMRMRVRMEYLVFQGMPLPGSLGG) are Cytoplasmic-facing. The helical transmembrane segment at 49–69 (LMLRLGQFCSALIAFSVMVSI) threads the bilayer. At 70-76 (RDFSVTA) the chain is on the extracellular side. Residues 77–97 (FCYLLAATVLQCLWSLALAVI) traverse the membrane as a helical segment. The Cytoplasmic segment spans residues 98–121 (DVYALLVKRSLRNPLLVSIFVVGD). A helical membrane pass occupies residues 122–142 (GVTATLTFAAACASAGVVVLI). Residues 143-160 (GNDISMCKSNPCANYEAA) lie on the Extracellular side of the membrane. The chain crosses the membrane as a helical span at residues 161-181 (IIMAFLSWFMVSISFVLTFWM). Residues 182-185 (LATL) lie on the Cytoplasmic side of the membrane.

Belongs to the Casparian strip membrane proteins (CASP) family. As to quaternary structure, homodimer and heterodimers.

Its subcellular location is the cell membrane. The polypeptide is CASP-like protein 5A1 (Pinus contorta (Shore pine)).